We begin with the raw amino-acid sequence, 219 residues long: Transcriptional regulatory protein QseB (219 aa).

Residues 2 to 116 form the Response regulatory domain; the sequence is RILLIEDDML…EVAARLEALM (115 aa). A 4-aspartylphosphate modification is found at Asp-51. A DNA-binding region (ompR/PhoB-type) is located at residues 124 to 218; the sequence is SNELRHGNVM…VHGIGYTLGE (95 aa).

In terms of processing, phosphorylated by QseC.

The protein resides in the cytoplasm. In terms of biological role, member of a two-component regulatory system QseB/QseC. Activates the flagella regulon by activating transcription of FlhDC. Currently it is not known whether this effect is direct or not. In Escherichia coli O157:H7, this protein is Transcriptional regulatory protein QseB (qseB).